The primary structure comprises 321 residues: uncharacterized protein (321 aa).

10 consecutive transmembrane segments (helical) span residues 6–26, 37–57, 72–92, 100–120, 134–154, 160–180, 196–216, 223–243, 255–275, and 277–297; these read LFIG…MFPV, FYFS…LLLV, WIIL…FLGQ, IMTA…ILWG, ILIA…SFFF, LFSI…TMGG, CLFG…QGYV, VIAA…IIAL, SING…IMVI, and GYNI…GLIL. 2 consecutive EamA domains span residues 18–146 and 175–300; these read MSWG…MVIT and VYTM…LNNI.

Belongs to the EamA transporter family.

The protein resides in the cell membrane. This is an uncharacterized protein from Bacillus subtilis (strain 168).